The following is a 316-amino-acid chain: MRDLKIPEQRHPEKAHRPDNAQPKKPSWIRVKAPGGKGYAETHKIMRENNLVTVCEEAGCPNVGECWSQGHATMMIMGEICTRGCTFCNIATGRPDTLDAFEPGRVAHAVQKLGLNHVVITSVDRDDLEDGGADHFAQTIRAVRHRSPQTTIEILTPDFLKCAPEVLETVVEAKPDVFNHNLETVPGLYPEVRPGARYFHSLRLLQRVKELDPSIFTKSGIMVGLGEQAPQVKQVMDDMRAADVDFLTIGQYLQPTPKHHAVDRFVTPEEFESYEKAAYGKGFLMVSATPLTRSSYHAGDDFAKLRAARNAKLGLA.

A compositionally biased stretch (basic and acidic residues) spans 1–19 (MRDLKIPEQRHPEKAHRPD). The tract at residues 1 to 31 (MRDLKIPEQRHPEKAHRPDNAQPKKPSWIRV) is disordered. Residues cysteine 55, cysteine 60, cysteine 66, cysteine 81, cysteine 85, cysteine 88, and serine 295 each coordinate [4Fe-4S] cluster. Residues 67-284 (WSQGHATMMI…EKAAYGKGFL (218 aa)) enclose the Radical SAM core domain.

The protein belongs to the radical SAM superfamily. Lipoyl synthase family. It depends on [4Fe-4S] cluster as a cofactor.

The protein resides in the cytoplasm. The enzyme catalyses [[Fe-S] cluster scaffold protein carrying a second [4Fe-4S](2+) cluster] + N(6)-octanoyl-L-lysyl-[protein] + 2 oxidized [2Fe-2S]-[ferredoxin] + 2 S-adenosyl-L-methionine + 4 H(+) = [[Fe-S] cluster scaffold protein] + N(6)-[(R)-dihydrolipoyl]-L-lysyl-[protein] + 4 Fe(3+) + 2 hydrogen sulfide + 2 5'-deoxyadenosine + 2 L-methionine + 2 reduced [2Fe-2S]-[ferredoxin]. It functions in the pathway protein modification; protein lipoylation via endogenous pathway; protein N(6)-(lipoyl)lysine from octanoyl-[acyl-carrier-protein]: step 2/2. Its function is as follows. Catalyzes the radical-mediated insertion of two sulfur atoms into the C-6 and C-8 positions of the octanoyl moiety bound to the lipoyl domains of lipoate-dependent enzymes, thereby converting the octanoylated domains into lipoylated derivatives. The chain is Lipoyl synthase from Ruegeria sp. (strain TM1040) (Silicibacter sp.).